The sequence spans 499 residues: MNFFIKSCFLDKEKTDCIVVSVFELSELSDSAIYLDKCSNGHITSLIKLGDIQGKIGDTLMLYKVPKILSKRILLVGCGKKDEINIIRFKKILKNTIHAIKKKSIKNIVYSFSNINIDNIYWMIRRMVLSLKESLYETIKINNTNIKNTNIHSITLNIIKKNDLFIAKTALKHALAIDHAITSTKNLSNLPPNICNPLYLSYKAQELSKKYENNIVVEIIDIKKMKELGMNAYIAVGNGSKNKPFMSVIKYSGNNIVNKKIIAFVGKGLTFDSGGISIKPALHMHEMKYDMCGAAAVYGTLIMAAELQLPLTVIGILSGCENMVGSHSFRPGDVLTTMSGQTVEILNTDAEGRLVLCDSLTYLERFSPDIVIDVATLTGACVTALGESVSGLFSNNEELSNQLLHASQETDDKIWSLPLFSEYHKELNSNIADFSNIGRGKAGAITAACFLSKFTKKYNWAHLDIAGTAWKSGKKSGATGRPVELLCQFLLNQSNYIYN.

The Mn(2+) site is built by K267 and D272. The active site involves K279. 3 residues coordinate Mn(2+): D290, D349, and E351. The active site involves R353.

This sequence belongs to the peptidase M17 family. It depends on Mn(2+) as a cofactor.

It is found in the cytoplasm. It catalyses the reaction Release of an N-terminal amino acid, Xaa-|-Yaa-, in which Xaa is preferably Leu, but may be other amino acids including Pro although not Arg or Lys, and Yaa may be Pro. Amino acid amides and methyl esters are also readily hydrolyzed, but rates on arylamides are exceedingly low.. The catalysed reaction is Release of an N-terminal amino acid, preferentially leucine, but not glutamic or aspartic acids.. In terms of biological role, presumably involved in the processing and regular turnover of intracellular proteins. Catalyzes the removal of unsubstituted N-terminal amino acids from various peptides. The protein is Probable cytosol aminopeptidase of Buchnera aphidicola subsp. Acyrthosiphon pisum (strain Tuc7).